The primary structure comprises 317 residues: ADP-L-glycero-D-manno-heptose-6-epimerase (317 aa).

NADP(+) contacts are provided by residues 10 to 11 (FI), 31 to 32 (DD), Lys38, Lys53, 76 to 80 (QGACS), and Asn93. Tyr140 functions as the Proton acceptor in the catalytic mechanism. Lys144 is a binding site for NADP(+). Residue Asn169 coordinates substrate. NADP(+)-binding residues include Ile170 and Lys178. Lys178 serves as the catalytic Proton acceptor. Substrate contacts are provided by residues Ala180, His187, 201 to 204 (FEGC), Arg214, and Tyr278.

Belongs to the NAD(P)-dependent epimerase/dehydratase family. HldD subfamily. In terms of assembly, homopentamer. NADP(+) is required as a cofactor.

The catalysed reaction is ADP-D-glycero-beta-D-manno-heptose = ADP-L-glycero-beta-D-manno-heptose. The protein operates within nucleotide-sugar biosynthesis; ADP-L-glycero-beta-D-manno-heptose biosynthesis; ADP-L-glycero-beta-D-manno-heptose from D-glycero-beta-D-manno-heptose 7-phosphate: step 4/4. Its function is as follows. Catalyzes the interconversion between ADP-D-glycero-beta-D-manno-heptose and ADP-L-glycero-beta-D-manno-heptose via an epimerization at carbon 6 of the heptose. The chain is ADP-L-glycero-D-manno-heptose-6-epimerase from Nitrosococcus oceani (strain ATCC 19707 / BCRC 17464 / JCM 30415 / NCIMB 11848 / C-107).